A 329-amino-acid polypeptide reads, in one-letter code: GTPase Obg (329 aa).

The region spanning methionine 1–leucine 159 is the Obg domain. In terms of domain architecture, OBG-type G spans alanine 160–glycine 328. ATP contacts are provided by residues glycine 166–serine 173, phenylalanine 191–valine 195, aspartate 213–glycine 216, asparagine 280–glutamate 283, and serine 309–alanine 311. Positions 173 and 193 each coordinate Mg(2+).

Belongs to the TRAFAC class OBG-HflX-like GTPase superfamily. OBG GTPase family. Monomer. It depends on Mg(2+) as a cofactor.

Its subcellular location is the cytoplasm. An essential GTPase which binds GTP, GDP and possibly (p)ppGpp with moderate affinity, with high nucleotide exchange rates and a fairly low GTP hydrolysis rate. Plays a role in control of the cell cycle, stress response, ribosome biogenesis and in those bacteria that undergo differentiation, in morphogenesis control. This chain is GTPase Obg, found in Prochlorococcus marinus (strain MIT 9303).